We begin with the raw amino-acid sequence, 74 residues long: Ubiquitin-like protein FUBI (74 aa).

This sequence belongs to the ubiquitin family.

This Pongo abelii (Sumatran orangutan) protein is Ubiquitin-like protein FUBI (FAU).